The following is a 492-amino-acid chain: Catalase isozyme 1 (492 aa).

Residues histidine 65 and asparagine 138 contribute to the active site. Residue tyrosine 348 participates in heme binding.

This sequence belongs to the catalase family. As to quaternary structure, homotetramer. The cofactor is heme. As to expression, high expression in seeds and early seedlings.

Its subcellular location is the glyoxysome. It carries out the reaction 2 H2O2 = O2 + 2 H2O. In terms of biological role, occurs in almost all aerobically respiring organisms and serves to protect cells from the toxic effects of hydrogen peroxide. This Cucurbita pepo (Vegetable marrow) protein is Catalase isozyme 1 (CAT1).